The sequence spans 514 residues: Bifunctional purine biosynthesis protein PurH (514 aa).

An MGS-like domain is found at 1–145 (MIKRALISVS…KNYQDVVVIV (145 aa)).

Belongs to the PurH family.

The enzyme catalyses (6R)-10-formyltetrahydrofolate + 5-amino-1-(5-phospho-beta-D-ribosyl)imidazole-4-carboxamide = 5-formamido-1-(5-phospho-D-ribosyl)imidazole-4-carboxamide + (6S)-5,6,7,8-tetrahydrofolate. It carries out the reaction IMP + H2O = 5-formamido-1-(5-phospho-D-ribosyl)imidazole-4-carboxamide. It functions in the pathway purine metabolism; IMP biosynthesis via de novo pathway; 5-formamido-1-(5-phospho-D-ribosyl)imidazole-4-carboxamide from 5-amino-1-(5-phospho-D-ribosyl)imidazole-4-carboxamide (10-formyl THF route): step 1/1. Its pathway is purine metabolism; IMP biosynthesis via de novo pathway; IMP from 5-formamido-1-(5-phospho-D-ribosyl)imidazole-4-carboxamide: step 1/1. This chain is Bifunctional purine biosynthesis protein PurH, found in Acetivibrio thermocellus (strain ATCC 27405 / DSM 1237 / JCM 9322 / NBRC 103400 / NCIMB 10682 / NRRL B-4536 / VPI 7372) (Clostridium thermocellum).